The following is a 193-amino-acid chain: Thymidine kinase (193 aa).

Residues 9-16 (STMNAGKS) and 87-90 (DEAQ) contribute to the ATP site. Glu-88 functions as the Proton acceptor in the catalytic mechanism. The Zn(2+) site is built by Cys-145, Cys-147, Cys-182, and His-185.

This sequence belongs to the thymidine kinase family. In terms of assembly, homotetramer.

Its subcellular location is the cytoplasm. The enzyme catalyses thymidine + ATP = dTMP + ADP + H(+). In Haemophilus influenzae (strain 86-028NP), this protein is Thymidine kinase.